A 603-amino-acid polypeptide reads, in one-letter code: Elongation factor 4 (603 aa).

Residues 2-184 enclose the tr-type G domain; it reads NHIRNFSIIA…AVVALIPAPK (183 aa). GTP is bound by residues 14–19 and 131–134; these read DHGKST and NKMD.

This sequence belongs to the TRAFAC class translation factor GTPase superfamily. Classic translation factor GTPase family. LepA subfamily.

Its subcellular location is the cell inner membrane. It carries out the reaction GTP + H2O = GDP + phosphate + H(+). Required for accurate and efficient protein synthesis under certain stress conditions. May act as a fidelity factor of the translation reaction, by catalyzing a one-codon backward translocation of tRNAs on improperly translocated ribosomes. Back-translocation proceeds from a post-translocation (POST) complex to a pre-translocation (PRE) complex, thus giving elongation factor G a second chance to translocate the tRNAs correctly. Binds to ribosomes in a GTP-dependent manner. In Polaromonas naphthalenivorans (strain CJ2), this protein is Elongation factor 4.